The chain runs to 747 residues: Elongation factor G, mitochondrial (747 aa).

The N-terminal 32 residues, 1–32, are a transit peptide targeting the mitochondrion; that stretch reads MTLITRVLNSNLPLRLSALKTVRQLQCGYSSH. In terms of domain architecture, tr-type G spans 42-319; sequence ERIRNIGISA…AIIDYLPNPG (278 aa). Residues 51 to 58, 118 to 122, and 172 to 175 each bind GTP; these read AHIDSGKT, DTPGH, and NKLD.

This sequence belongs to the TRAFAC class translation factor GTPase superfamily. Classic translation factor GTPase family. EF-G/EF-2 subfamily.

It is found in the mitochondrion. It functions in the pathway protein biosynthesis; polypeptide chain elongation. Its function is as follows. Mitochondrial GTPase that catalyzes the GTP-dependent ribosomal translocation step during translation elongation. During this step, the ribosome changes from the pre-translocational (PRE) to the post-translocational (POST) state as the newly formed A-site-bound peptidyl-tRNA and P-site-bound deacylated tRNA move to the P and E sites, respectively. Catalyzes the coordinated movement of the two tRNA molecules, the mRNA and conformational changes in the ribosome. Essential during development as it acts as a retrograde signal from mitochondria to the nucleus to slow down cell proliferation if mitochondrial energy output is low. This chain is Elongation factor G, mitochondrial, found in Drosophila virilis (Fruit fly).